The chain runs to 1113 residues: Protein translocase subunit SecA (1113 aa).

ATP-binding positions include Gln175, 193–197 (GEGKT), and Asp694. Basic and acidic residues predominate over residues 1042-1072 (RHAAEQRTDMSKYRTQKDDIEAQQKAQRDAA). Residues 1042–1113 (RHAAEQRTDM…KFKQCHGRNL (72 aa)) form a disordered region. Residues Cys1097, Cys1099, Cys1108, and His1109 each coordinate Zn(2+). Basic residues predominate over residues 1103–1113 (KKFKQCHGRNL).

Belongs to the SecA family. Monomer and homodimer. Part of the essential Sec protein translocation apparatus which comprises SecA, SecYEG and auxiliary proteins SecDF. Other proteins may also be involved. Zn(2+) is required as a cofactor.

The protein localises to the cell inner membrane. Its subcellular location is the cytoplasm. The catalysed reaction is ATP + H2O + cellular proteinSide 1 = ADP + phosphate + cellular proteinSide 2.. Part of the Sec protein translocase complex. Interacts with the SecYEG preprotein conducting channel. Has a central role in coupling the hydrolysis of ATP to the transfer of proteins into and across the cell membrane, serving as an ATP-driven molecular motor driving the stepwise translocation of polypeptide chains across the membrane. The sequence is that of Protein translocase subunit SecA from Porphyromonas gingivalis (strain ATCC 33277 / DSM 20709 / CIP 103683 / JCM 12257 / NCTC 11834 / 2561).